The following is a 433-amino-acid chain: tRNA-2-methylthio-N(6)-dimethylallyladenosine synthase (433 aa).

Positions 4–119 constitute an MTTase N-terminal domain; sequence KKLFIQTLGC…ITQAIKTPKF (116 aa). Residues Cys13, Cys50, Cys82, Cys151, Cys155, and Cys158 each coordinate [4Fe-4S] cluster. One can recognise a Radical SAM core domain in the interval 137–370; that stretch reads RNSIYKSYIN…QNRHSEILDE (234 aa). The region spanning 373–433 is the TRAM domain; that stretch reads KKQENKTFKV…KRMVLYGEIV (61 aa).

It belongs to the methylthiotransferase family. MiaB subfamily. In terms of assembly, monomer. [4Fe-4S] cluster is required as a cofactor.

It is found in the cytoplasm. It carries out the reaction N(6)-dimethylallyladenosine(37) in tRNA + (sulfur carrier)-SH + AH2 + 2 S-adenosyl-L-methionine = 2-methylsulfanyl-N(6)-dimethylallyladenosine(37) in tRNA + (sulfur carrier)-H + 5'-deoxyadenosine + L-methionine + A + S-adenosyl-L-homocysteine + 2 H(+). In terms of biological role, catalyzes the methylthiolation of N6-(dimethylallyl)adenosine (i(6)A), leading to the formation of 2-methylthio-N6-(dimethylallyl)adenosine (ms(2)i(6)A) at position 37 in tRNAs that read codons beginning with uridine. The protein is tRNA-2-methylthio-N(6)-dimethylallyladenosine synthase of Campylobacter jejuni (strain RM1221).